We begin with the raw amino-acid sequence, 173 residues long: Alpha-crystallin A chain (173 aa).

Methionine 1 bears the N-acetylmethionine mark. In terms of domain architecture, sHSP spans 52–164; that stretch reads LFRSVLESGI…SDRPIPVARE (113 aa). Zn(2+) is bound by residues histidine 100, glutamate 102, histidine 107, and histidine 154. The segment at 152 to 173 is disordered; it reads TIHSDRPIPVAREEKPTSAPSS. Basic and acidic residues predominate over residues 153 to 167; the sequence is IHSDRPIPVAREEKP.

It belongs to the small heat shock protein (HSP20) family. In terms of assembly, heteropolymer composed of three CRYAA and one CRYAB subunits. Inter-subunit bridging via zinc ions enhances stability, which is crucial as there is no protein turn over in the lens. Can also form homodimers and homotetramers (dimers of dimers) which serve as the building blocks of homooligomers. Within homooligomers, the zinc-binding motif is created from residues of 3 different molecules. His-100 and Glu-102 from one molecule are ligands of the zinc ion, and His-107 and His-154 residues from additional molecules complete the site with tetrahedral coordination geometry.

It localises to the cytoplasm. The protein localises to the nucleus. Contributes to the transparency and refractive index of the lens. May act as a chaperone, preventing aggregation of various proteins under a wide range of stress conditions. This Alligator mississippiensis (American alligator) protein is Alpha-crystallin A chain (CRYAA).